A 344-amino-acid chain; its full sequence is 4-hydroxy-3-methylbut-2-en-1-yl diphosphate synthase (flavodoxin) (344 aa).

4 residues coordinate [4Fe-4S] cluster: cysteine 253, cysteine 256, cysteine 288, and glutamate 295.

It belongs to the IspG family. [4Fe-4S] cluster serves as cofactor.

It catalyses the reaction (2E)-4-hydroxy-3-methylbut-2-enyl diphosphate + oxidized [flavodoxin] + H2O + 2 H(+) = 2-C-methyl-D-erythritol 2,4-cyclic diphosphate + reduced [flavodoxin]. Its pathway is isoprenoid biosynthesis; isopentenyl diphosphate biosynthesis via DXP pathway; isopentenyl diphosphate from 1-deoxy-D-xylulose 5-phosphate: step 5/6. Converts 2C-methyl-D-erythritol 2,4-cyclodiphosphate (ME-2,4cPP) into 1-hydroxy-2-methyl-2-(E)-butenyl 4-diphosphate. In Thermotoga maritima (strain ATCC 43589 / DSM 3109 / JCM 10099 / NBRC 100826 / MSB8), this protein is 4-hydroxy-3-methylbut-2-en-1-yl diphosphate synthase (flavodoxin).